The primary structure comprises 425 residues: Pre-mRNA-splicing factor RBM22 (425 aa).

The segment at 159-186 adopts a C3H1-type zinc-finger fold; the sequence is RNRPHICSFWVKGECKRGEECPYRHEKP. The RRM domain maps to 232–305; sequence TTLYIGGLGE…RRLNVKWGRS (74 aa). Disordered stretches follow at residues 304–331 and 384–425; these read RSQAARGKGEKDGVTESGIRLEPVPGLP and HTMD…HGGP. The segment covering 389 to 399 has biased composition (pro residues); it reads MAPPVPPPMAL.

This sequence belongs to the SLT11 family. In terms of assembly, component of the pre-catalytic and catalytic spliceosome complexes. Component of the postcatalytic spliceosome P complex.

It localises to the nucleus. The protein resides in the cytoplasm. In terms of biological role, required for pre-mRNA splicing as component of the activated spliceosome. Involved in the first step of pre-mRNA splicing. Binds directly to the internal stem-loop (ISL) domain of the U6 snRNA and to the pre-mRNA intron near the 5' splice site during the activation and catalytic phases of the spliceosome cycle. Required for normal early embryogenesis. The sequence is that of Pre-mRNA-splicing factor RBM22 (rbm22) from Danio rerio (Zebrafish).